Reading from the N-terminus, the 415-residue chain is E3 ubiquitin-protein ligase RNF135 (415 aa).

The RING-type zinc-finger motif lies at 21 to 67 (CIICQGLLDWPTTLPCGHSFCLQCLKDLWVSKRAGVDSCPWACPICR). Residues 181-206 (TFSASQKKIQEILRDLEKIQETLQGS) adopt a coiled-coil conformation. Positions 228–415 (PDQRYPVSRK…LTPGNYLEIL (188 aa)) constitute a B30.2/SPRY domain.

In terms of assembly, homodimer. Interacts (homodimer) with RIGI (double-stranded RNA-bound oligomeric form); involved in both RIGI ubiquitination, oligomerization into filaments associated with viral RNAs and the bridging of these filaments. Interacts with UBE2D3 and UBE2N; E2 ubiquitin ligases involved in RNF135-mediated ubiquitination of RIGI and activation of the RIG-I signaling pathway. Interacts with PCBP2.

Its subcellular location is the cytoplasm. It localises to the stress granule. It carries out the reaction S-ubiquitinyl-[E2 ubiquitin-conjugating enzyme]-L-cysteine + [acceptor protein]-L-lysine = [E2 ubiquitin-conjugating enzyme]-L-cysteine + N(6)-ubiquitinyl-[acceptor protein]-L-lysine.. Its pathway is protein modification; protein ubiquitination. In terms of biological role, E2-dependent E3 ubiquitin-protein ligase that functions as a RIGI coreceptor in the sensing of viral RNAs in cell cytoplasm and the activation of the antiviral innate immune response. Together with the UBE2D3, UBE2N and UB2V1 E2 ligases, catalyzes the 'Lys-63'-linked polyubiquitination of RIGI oligomerized on viral RNAs, an essential step in the activation of the RIG-I signaling pathway. Through a ubiquitin-independent parallel mechanism, which consists in bridging RIGI filaments forming on longer viral RNAs, further activates the RIG-I signaling pathway. This second mechanism that synergizes with the ubiquitin-dependent one would thereby allow an RNA length-dependent regulation of the RIG-I signaling pathway. Associated with the E2 ligase UBE2N, also constitutively synthesizes unanchored 'Lys-63'-linked polyubiquitin chains that may also activate the RIG-I signaling pathway. The chain is E3 ubiquitin-protein ligase RNF135 from Rattus norvegicus (Rat).